Consider the following 75-residue polypeptide: Tautomerase PptA (75 aa).

Catalysis depends on Pro2, which acts as the Proton acceptor; via imino nitrogen.

It belongs to the 4-oxalocrotonate tautomerase family. PptA subfamily. Homodimer.

Its subcellular location is the cytoplasm. The sequence is that of Tautomerase PptA from Shigella sonnei (strain Ss046).